The primary structure comprises 61 residues: Small ribosomal subunit protein uS14B (61 aa).

Cysteine 24, cysteine 27, cysteine 40, and cysteine 43 together coordinate Zn(2+).

The protein belongs to the universal ribosomal protein uS14 family. Zinc-binding uS14 subfamily. As to quaternary structure, part of the 30S ribosomal subunit. Contacts proteins S3 and S10. Requires Zn(2+) as cofactor.

In terms of biological role, binds 16S rRNA, required for the assembly of 30S particles and may also be responsible for determining the conformation of the 16S rRNA at the A site. The protein is Small ribosomal subunit protein uS14B of Lactococcus lactis subsp. lactis (strain IL1403) (Streptococcus lactis).